The following is a 752-amino-acid chain: Lid2 complex component jmj3 (752 aa).

Residues 34 to 75 (IPVVEPKISEFVDMESFIRRVERLGKKYGAIKVVRPSSVLNP) form the JmjN domain. A JmjC domain is found at 162-333 (YTNRPSIPFY…NYEFSNLRRL (172 aa)). 2 stretches are compositionally biased toward polar residues: residues 391 to 402 (SFSQRDFDSPNS) and 409 to 423 (LMSN…HFNS). A disordered region spans residues 391-438 (SFSQRDFDSPNSINPPSPLMSNHESASTEHFNSTTTTEKELSSLHVGE). Basic and acidic residues predominate over residues 427 to 438 (TEKELSSLHVGE).

Component of the Lid2 complex composed of ash2, jmj3, lid2, sdc1 and snt2.

It localises to the nucleus. This Schizosaccharomyces pombe (strain 972 / ATCC 24843) (Fission yeast) protein is Lid2 complex component jmj3.